Consider the following 319-residue polypeptide: D-galacturonate reductase (319 aa).

The Proton donor role is filled by Tyr58. His121 is a binding site for substrate. Position 216–275 (216–275) interacts with NADP(+); that stretch reads SPLGAARTKWGDDRVLGSDIIEEIAQAKGKSTAQISLRWVYEQGVSIVTKSYNKERMRQN.

The protein belongs to the aldo/keto reductase family. Expressed specifically in the receptacle tissue of the fruit.

It catalyses the reaction L-galactonate + NADP(+) = aldehydo-D-galacturonate + NADPH + H(+). It participates in cofactor biosynthesis; L-ascorbate biosynthesis. Functionally, involved in ascorbic acid (vitamin C) biosynthesis. This is D-galacturonate reductase (GALUR) from Fragaria ananassa (Strawberry).